A 289-amino-acid polypeptide reads, in one-letter code: ATP synthase subunit a (289 aa).

6 helical membrane passes run 43–63, 103–123, 160–180, 193–213, 232–252, and 259–279; these read AFHL…LFIF, VIAP…AVDL, FCVF…GGFI, IFVQ…TLIA, VFIL…GLGV, and AVFH…LTIV.

It belongs to the ATPase A chain family. F-type ATPases have 2 components, CF(1) - the catalytic core - and CF(0) - the membrane proton channel. CF(1) has five subunits: alpha(3), beta(3), gamma(1), delta(1), epsilon(1). CF(0) has three main subunits: a(1), b(2) and c(9-12). The alpha and beta chains form an alternating ring which encloses part of the gamma chain. CF(1) is attached to CF(0) by a central stalk formed by the gamma and epsilon chains, while a peripheral stalk is formed by the delta and b chains.

It is found in the cell inner membrane. Key component of the proton channel; it plays a direct role in the translocation of protons across the membrane. The chain is ATP synthase subunit a from Pseudomonas putida (strain GB-1).